The sequence spans 637 residues: Probable polypeptide N-acetylgalactosaminyltransferase 8 (637 aa).

The Cytoplasmic portion of the chain corresponds to 1–6 (MMFWRK). The helical; Signal-anchor for type II membrane protein transmembrane segment at 7–29 (LPKALFIGLTLAIAVNLLLVFSS) threads the bilayer. The Lumenal segment spans residues 30-637 (KGTLQNLFTG…VRDWGQTNSQ (608 aa)). Asn-85, Asn-107, and Asn-160 each carry an N-linked (GlcNAc...) asparagine glycan. 5 cysteine pairs are disulfide-bonded: Cys-171-Cys-404, Cys-395-Cys-474, Cys-509-Cys-525, Cys-556-Cys-571, and Cys-599-Cys-617. A catalytic subdomain A region spans residues 180 to 294 (LPSLSVILIF…VGWAEPILAR (115 aa)). Positions 221 and 255 each coordinate substrate. Positions 278, 280, and 409 each coordinate Mn(2+). A catalytic subdomain B region spans residues 351–412 (PVKSPSIMGI…PCSRIAHLER (62 aa)). Residues Arg-412 and Tyr-417 each coordinate substrate. One can recognise a Ricin B-type lectin domain in the interval 496–634 (GYGRMKNLLD…QHTVRDWGQT (139 aa)).

It belongs to the glycosyltransferase 2 family. GalNAc-T subfamily. Mn(2+) is required as a cofactor. Widely expressed. Expressed in heart, skeletal muscle, kidney, liver, small intestine and placenta. Weakly expressed in colon, thymus, spleen, lung and leukocyte.

The protein localises to the golgi apparatus membrane. It carries out the reaction L-seryl-[protein] + UDP-N-acetyl-alpha-D-galactosamine = a 3-O-[N-acetyl-alpha-D-galactosaminyl]-L-seryl-[protein] + UDP + H(+). The enzyme catalyses L-threonyl-[protein] + UDP-N-acetyl-alpha-D-galactosamine = a 3-O-[N-acetyl-alpha-D-galactosaminyl]-L-threonyl-[protein] + UDP + H(+). It functions in the pathway protein modification; protein glycosylation. Functionally, probably catalyzes the initial reaction in O-linked oligosaccharide biosynthesis, the transfer of an N-acetyl-D-galactosamine residue to a serine or threonine residue on the protein receptor. This Homo sapiens (Human) protein is Probable polypeptide N-acetylgalactosaminyltransferase 8 (GALNT8).